Consider the following 301-residue polypeptide: Glycine--tRNA ligase alpha subunit (301 aa).

It belongs to the class-II aminoacyl-tRNA synthetase family. Tetramer of two alpha and two beta subunits.

The protein resides in the cytoplasm. The enzyme catalyses tRNA(Gly) + glycine + ATP = glycyl-tRNA(Gly) + AMP + diphosphate. The chain is Glycine--tRNA ligase alpha subunit from Bordetella avium (strain 197N).